Reading from the N-terminus, the 322-residue chain is Biotin synthase (322 aa).

The Radical SAM core domain occupies 39–266 (NQVQISSLLN…KSVVRLSAGR (228 aa)). Residues C54, C58, and C61 each contribute to the [4Fe-4S] cluster site. C98, C129, C189, and R261 together coordinate [2Fe-2S] cluster.

The protein belongs to the radical SAM superfamily. Biotin synthase family. Homodimer. [4Fe-4S] cluster serves as cofactor. Requires [2Fe-2S] cluster as cofactor.

It carries out the reaction (4R,5S)-dethiobiotin + (sulfur carrier)-SH + 2 reduced [2Fe-2S]-[ferredoxin] + 2 S-adenosyl-L-methionine = (sulfur carrier)-H + biotin + 2 5'-deoxyadenosine + 2 L-methionine + 2 oxidized [2Fe-2S]-[ferredoxin]. It functions in the pathway cofactor biosynthesis; biotin biosynthesis; biotin from 7,8-diaminononanoate: step 2/2. Functionally, catalyzes the conversion of dethiobiotin (DTB) to biotin by the insertion of a sulfur atom into dethiobiotin via a radical-based mechanism. In Vesicomyosocius okutanii subsp. Calyptogena okutanii (strain HA), this protein is Biotin synthase.